Reading from the N-terminus, the 293-residue chain is Probable xyloglucan endotransglucosylase/hydrolase protein B (293 aa).

An N-terminal signal peptide occupies residues Met-1–Cys-21. A GH16 domain is found at Ala-23–Tyr-220. The Nucleophile role is filled by Glu-106. Residue Glu-110 is the Proton donor of the active site. A xyloglucan-binding site is contributed by Glu-110. N-linked (GlcNAc...) asparagine glycosylation occurs at Asn-114. Residues Gln-123–Asn-125, Asp-133–Glu-135, Asp-199–Trp-200, and Gly-204 contribute to the xyloglucan site. 2 disulfide bridges follow: Cys-228-Cys-237 and Cys-274-Cys-287. Arg-279 provides a ligand contact to xyloglucan.

The protein belongs to the glycosyl hydrolase 16 family. XTH group 1 subfamily. Contains at least one intrachain disulfide bond essential for its enzymatic activity. Predominantly expressed in the phloem fibers of growing internodes. Weakly or not expressed in the xylem. In the internode, it is expressed closer to the bottom of the internode compared to XTHA.

It is found in the secreted. It localises to the cell wall. The protein resides in the extracellular space. Its subcellular location is the apoplast. It catalyses the reaction breaks a beta-(1-&gt;4) bond in the backbone of a xyloglucan and transfers the xyloglucanyl segment on to O-4 of the non-reducing terminal glucose residue of an acceptor, which can be a xyloglucan or an oligosaccharide of xyloglucan.. In terms of biological role, catalyzes xyloglucan endohydrolysis (XEH) and/or endotransglycosylation (XET). Cleaves and religates xyloglucan polymers, an essential constituent of the primary cell wall, and thereby participates in cell wall construction of growing tissues. The polypeptide is Probable xyloglucan endotransglucosylase/hydrolase protein B (XTHB) (Phaseolus angularis (Azuki bean)).